Reading from the N-terminus, the 443-residue chain is Glucose-6-phosphate isomerase (443 aa).

Glu-285 functions as the Proton donor in the catalytic mechanism. Active-site residues include His-306 and Lys-420.

It belongs to the GPI family.

The protein resides in the cytoplasm. The catalysed reaction is alpha-D-glucose 6-phosphate = beta-D-fructose 6-phosphate. It functions in the pathway carbohydrate biosynthesis; gluconeogenesis. Its pathway is carbohydrate degradation; glycolysis; D-glyceraldehyde 3-phosphate and glycerone phosphate from D-glucose: step 2/4. In terms of biological role, catalyzes the reversible isomerization of glucose-6-phosphate to fructose-6-phosphate. In Staphylococcus saprophyticus subsp. saprophyticus (strain ATCC 15305 / DSM 20229 / NCIMB 8711 / NCTC 7292 / S-41), this protein is Glucose-6-phosphate isomerase.